Reading from the N-terminus, the 64-residue chain is Large ribosomal subunit protein bL35 (64 aa).

A disordered region spans residues 1-55 (MPKMKSNKSVAARFKLTGSGQLKRTRPGKRHKLSKRSSQQKRNLSKQPLVDQGQV). The span at 23 to 39 (KRTRPGKRHKLSKRSSQ) shows a compositional bias: basic residues.

Belongs to the bacterial ribosomal protein bL35 family.

This chain is Large ribosomal subunit protein bL35, found in Chlamydia muridarum (strain MoPn / Nigg).